The sequence spans 238 residues: 2-C-methyl-D-erythritol 4-phosphate cytidylyltransferase (238 aa).

This sequence belongs to the IspD/TarI cytidylyltransferase family. IspD subfamily.

The enzyme catalyses 2-C-methyl-D-erythritol 4-phosphate + CTP + H(+) = 4-CDP-2-C-methyl-D-erythritol + diphosphate. It participates in isoprenoid biosynthesis; isopentenyl diphosphate biosynthesis via DXP pathway; isopentenyl diphosphate from 1-deoxy-D-xylulose 5-phosphate: step 2/6. In terms of biological role, catalyzes the formation of 4-diphosphocytidyl-2-C-methyl-D-erythritol from CTP and 2-C-methyl-D-erythritol 4-phosphate (MEP). The sequence is that of 2-C-methyl-D-erythritol 4-phosphate cytidylyltransferase from Pelotomaculum thermopropionicum (strain DSM 13744 / JCM 10971 / SI).